The sequence spans 458 residues: Histidine--tRNA ligase (458 aa).

Belongs to the class-II aminoacyl-tRNA synthetase family. In terms of assembly, homodimer.

It is found in the cytoplasm. The catalysed reaction is tRNA(His) + L-histidine + ATP = L-histidyl-tRNA(His) + AMP + diphosphate + H(+). This is Histidine--tRNA ligase from Azobacteroides pseudotrichonymphae genomovar. CFP2.